Reading from the N-terminus, the 119-residue chain is Holo-[acyl-carrier-protein] synthase (119 aa).

Residues Asp-5 and Glu-51 each coordinate Mg(2+).

Belongs to the P-Pant transferase superfamily. AcpS family. Requires Mg(2+) as cofactor.

Its subcellular location is the cytoplasm. The enzyme catalyses apo-[ACP] + CoA = holo-[ACP] + adenosine 3',5'-bisphosphate + H(+). In terms of biological role, transfers the 4'-phosphopantetheine moiety from coenzyme A to a Ser of acyl-carrier-protein. This chain is Holo-[acyl-carrier-protein] synthase, found in Helicobacter pylori (strain HPAG1).